We begin with the raw amino-acid sequence, 414 residues long: Seminal vesicle secretory protein 2 (414 aa).

The first 22 residues, 1–22 (MKSSVFILSLFLLLERQAAVVG), serve as a signal peptide directing secretion. Q23 bears the Pyrrolidone carboxylic acid mark. A run of 13 repeats spans residues 108–120 (ESQI…VKSS), 127–139 (GSQL…VKSS), 140–152 (ESQL…VKAS), 153–165 (GSQL…VKAS), 166–178 (GSQL…MKSS), 179–191 (GSQV…MKSS), 192–204 (GSQV…MKAS), 205–217 (ESQI…RKSQ), 224–236 (YGQM…TKSL), 237–249 (ESQA…VKSQ), 257–269 (YGQR…ETQL), 275–287 (DAQL…QKSQ), and 299–311 (SAQL…QKSL). Residues 108–311 (ESQIKSFRQV…LKSFGQQKSL (204 aa)) form a 13 X 13 AA tandem repeats region. Disordered stretches follow at residues 170-228 (KSYG…GQMK), 240-294 (AKSF…SFSQ), and 306-369 (GQQK…FGQE). A compositionally biased stretch (polar residues) spans 240 to 259 (AKSFGQVKSQSGQMKSSYGQ). Residues 277-294 (QLKSYGQQKSQKQSSFSQ) are compositionally biased toward low complexity. Polar residues-rich tracts occupy residues 306 to 321 (GQQK…TQQK) and 342 to 351 (SVQQKSTQQM). Low complexity predominate over residues 358–369 (SQFGQQRQFGQE).

Post-translationally, the repeating unit appears to be involved in the formation of the copulatory plug via a transglutaminase reaction cross-linking glutamine and lysine residues.

Its function is as follows. The rat seminal vesicle contains six major androgen-dependent secretory proteins referred to as SVS I-VI. The SVS I-III proteins appear to be components of the rat copulatory plug, with the SVS II protein being the major component. The chain is Seminal vesicle secretory protein 2 (Svs2) from Rattus norvegicus (Rat).